A 508-amino-acid chain; its full sequence is Pancreatic alpha-amylase 2a5 (508 aa).

Positions 1–15 are cleaved as a signal peptide; that stretch reads MKFVLLLSLIGFCWA. Position 16 is a pyrrolidone carboxylic acid (Q16). 3 disulfides stabilise this stretch: C43/C101, C85/C130, and C156/C172. Ca(2+) contacts are provided by N115, R170, and D179. Position 207 (R207) interacts with chloride. D209 functions as the Nucleophile in the catalytic mechanism. A Ca(2+)-binding site is contributed by H213. Residue E245 is the Proton donor of the active site. Residues N310 and R349 each coordinate chloride. 2 disulfide bridges follow: C390/C396 and C462/C474.

The protein belongs to the glycosyl hydrolase 13 family. As to quaternary structure, monomer. It depends on Ca(2+) as a cofactor. Chloride is required as a cofactor.

It is found in the secreted. Its subcellular location is the extracellular space. The catalysed reaction is Endohydrolysis of (1-&gt;4)-alpha-D-glucosidic linkages in polysaccharides containing three or more (1-&gt;4)-alpha-linked D-glucose units.. The protein is Pancreatic alpha-amylase 2a5 of Mus musculus (Mouse).